The primary structure comprises 201 residues: Regulator of G-protein signaling rgs-1 (201 aa).

Residues 37–156 (SWQQSFDTLM…FLTSIFYRET (120 aa)) form the RGS domain. Positions 168-201 (GGDEEKEREQRAERARLNVPATAAEGSSKDISMV) are disordered. The span at 170–183 (DEEKEREQRAERAR) shows a compositional bias: basic and acidic residues.

In terms of tissue distribution, expressed in most or all neurons.

Its function is as follows. Inhibits G protein signaling in nervous system, interacting preferentially with the G(O) subfamily member goa-1. In vitro, protein acts as a GTPase activator of goa-1. Rgs-1 and rgs-2 redundantly adjust signaling when worms are fed to allow rapid induction of egg-laying behavior. This chain is Regulator of G-protein signaling rgs-1 (rgs-1), found in Caenorhabditis elegans.